The sequence spans 486 residues: N-succinylglutamate 5-semialdehyde dehydrogenase (486 aa).

An NAD(+)-binding site is contributed by 221-226; that stretch reads GSSATG. Active-site residues include Glu244 and Cys278.

The protein belongs to the aldehyde dehydrogenase family. AstD subfamily.

It carries out the reaction N-succinyl-L-glutamate 5-semialdehyde + NAD(+) + H2O = N-succinyl-L-glutamate + NADH + 2 H(+). It functions in the pathway amino-acid degradation; L-arginine degradation via AST pathway; L-glutamate and succinate from L-arginine: step 4/5. Catalyzes the NAD-dependent reduction of succinylglutamate semialdehyde into succinylglutamate. In Chromobacterium violaceum (strain ATCC 12472 / DSM 30191 / JCM 1249 / CCUG 213 / NBRC 12614 / NCIMB 9131 / NCTC 9757 / MK), this protein is N-succinylglutamate 5-semialdehyde dehydrogenase.